A 2285-amino-acid polypeptide reads, in one-letter code: AT-rich interactive domain-containing protein 1A (2285 aa).

The span at 1 to 14 shows a compositional bias: low complexity; the sequence is MAAQVAPAAASSLG. Disordered regions lie at residues 1–820 and 978–1005; these read MAAQ…ALPN and ATKMNNKADGTPKTESKSKKSSSSTTTN. Ala2 is subject to N-acetylalanine. Basic and acidic residues predominate over residues 23–35; sequence ELKKAEQQQREEA. Ser58 and Ser79 each carry phosphoserine. Gly residues-rich tracts occupy residues 79–95 and 121–130; these read SNGGGGGGGAGSGGGPG and PGGGGGGSSD. Composition is skewed to low complexity over residues 131 to 142, 212 to 221, and 228 to 265; these read GVGAPPHSAAAA, YNSYYPNRSA, and AYALSSPRGGTPGSGAAAAAGSKPPPSSSASASSSSSS. The residue at position 233 (Ser233) is a Phosphoserine. Residues 273 to 286 are compositionally biased toward gly residues; sequence AMGGGGPSAAGGGT. At Thr286 the chain carries Phosphothreonine. An LXXLL motif is present at residues 295–299; that stretch reads LNQLL. The span at 295–306 shows a compositional bias: polar residues; sequence LNQLLTSPSSAR. The residue at position 301 (Ser301) is a Phosphoserine. The segment covering 310–327 has biased composition (gly residues); the sequence is GYPGGDYSGGPQDGGAGK. The span at 338 to 353 shows a compositional bias: low complexity; sequence GAAAAAAAAAAASGGA. Phosphoserine is present on residues Ser363 and Ser382. Residues 400 to 425 show a composition bias toward low complexity; that stretch reads PYSQQQGPPSGPQQGHGYPGQPYGSQ. At Arg429 the chain carries Asymmetric dimethylarginine. 3 stretches are compositionally biased toward low complexity: residues 447-457, 465-546, and 553-595; these read YTQQIPPYGQQ, QGQT…QHPQ, and QPQA…YSQQ. Ser604 bears the Phosphoserine mark. Over residues 610–621 the composition is skewed to low complexity; it reads SQASSAPSMTSS. The segment covering 628–637 has biased composition (polar residues); the sequence is MNLSLQSRPS. Low complexity predominate over residues 658-674; the sequence is SPGVSTSGISSSQGEQS. Residues 675-685 are compositionally biased toward polar residues; it reads NPAQSPFSPHT. Phosphoserine is present on residues Ser696, Ser698, Ser702, Ser730, Ser764, and Ser772. Polar residues-rich tracts occupy residues 730–747 and 755–793; these read SGQSDSIMHPSMNQSSIA and RNPQMPQYSSPQPGSALSPRQPSGGQIHTGMGSYQQNSM. The span at 797–807 shows a compositional bias: gly residues; that stretch reads GPQGGQYGPQG. Low complexity predominate over residues 808 to 820; the sequence is GYPRQPNYNALPN. An ARID domain is found at 1017–1108; that stretch reads EPERKMWVDR…CLYAFECKIE (92 aa). 2 disordered regions span residues 1113–1483 and 1539–1603; these read PPPD…MMGG and ANHE…SPSK. Low complexity predominate over residues 1141-1154; sequence MQGPQTPQSTSSSM. A compositionally biased stretch (pro residues) spans 1162–1177; it reads PPTPASTPHSQIPPLP. Ser1184 is modified (phosphoserine). Residues 1194 to 1219 are compositionally biased toward polar residues; that stretch reads GSDSTFQKRNSMTPNPGYQPSMNTSD. Ser1235 is modified (phosphoserine). Position 1276 is an omega-N-methylarginine (Arg1276). Polar residues-rich tracts occupy residues 1299–1315 and 1339–1356; these read NMSTGAPQPNLMPSNPD and YGNQFSTQGTPSGSPFPS. The segment covering 1357–1367 has biased composition (low complexity); that stretch reads QQTTMYQQQQQ. The short motif at 1368–1387 is the Nuclear localization signal element; sequence NYKRPMDGTYGPPAKRHEGE. The span at 1396 to 1425 shows a compositional bias: low complexity; that stretch reads GQGQPQQQQLPPAQPQPASQQQAAQPSPQQ. Residues 1468–1477 are compositionally biased toward polar residues; sequence PGTNAQQNMP. The span at 1554–1577 shows a compositional bias: pro residues; it reads PYGPSAPVPPMTRPPPSNYQPPPS. Ser1604 carries the phosphoserine modification. Lys1612 bears the N6-acetyllysine mark. Residues 1709 to 1713 carry the LXXLL motif; sequence LPGLL. 2 disordered regions span residues 1747-1774 and 1859-1907; these read PGRFSKVSSPAPMEGGEEEEELLGPKLE and FESK…EKRI. 2 positions are modified to phosphoserine: Ser1751 and Ser1754. Acidic residues predominate over residues 1761–1774; the sequence is GGEEEEELLGPKLE. The segment covering 1886-1895 has biased composition (low complexity); that stretch reads EGTPGTTDQE. Thr1888 carries the phosphothreonine modification. The residue at position 1905 (Lys1905) is an N6-acetyllysine. A phosphoserine mark is found at Ser1929 and Ser1944. 2 short sequence motifs (LXXLL) span residues 1967–1971 and 2085–2089; these read LCTLL and LDGLL.

In terms of assembly, component of SWI/SNF chromatin remodeling complexes, in some of which it can be mutually exclusive with ARID1B/BAF250B. The canonical complex contains a catalytic subunit (either SMARCA4/BRG1/BAF190A or SMARCA2/BRM/BAF190B) and at least SMARCE1, ACTL6A/BAF53, SMARCC1/BAF155, SMARCC2/BAF170, and SMARCB1/SNF5/BAF47. Other subunits specific to each of the complexes may also be present permitting several possible combinations developmentally and tissue specific. Component of the BAF (SWI/SNF-A) complex, which includes at least actin (ACTB), ARID1A/BAF250A, ARID1B/BAF250B, SMARCA2/BRM, SMARCA4/BRG1/BAF190A, ACTL6A/BAF53, ACTL6B/BAF53B, SMARCE1/BAF57, SMARCC1/BAF155, SMARCC2/BAF170, SMARCB1/SNF5/INI1, and one or more SMARCD1/BAF60A, SMARCD2/BAF60B, or SMARCD3/BAF60C. In muscle cells, the BAF complex also contains DPF3. Component of neural progenitors-specific chromatin remodeling complex (npBAF complex) composed of at least, ARID1A/BAF250A or ARID1B/BAF250B, SMARCD1/BAF60A, SMARCD3/BAF60C, SMARCA2/BRM/BAF190B, SMARCA4/BRG1/BAF190A, SMARCB1/BAF47, SMARCC1/BAF155, SMARCE1/BAF57, SMARCC2/BAF170, PHF10/BAF45A, ACTL6A/BAF53A and actin. Component of neuron-specific chromatin remodeling complex (nBAF complex) composed of at least, ARID1A/BAF250A or ARID1B/BAF250B, SMARCD1/BAF60A, SMARCD3/BAF60C, SMARCA2/BRM/BAF190B, SMARCA4/BRG1/BAF190A, SMARCB1/BAF47, SMARCC1/BAF155, SMARCE1/BAF57, SMARCC2/BAF170, DPF1/BAF45B, DPF3/BAF45C, ACTL6B/BAF53B and actin. Component of a SWI/SNF-like EBAFa complex, at least composed of SMARCA4/BRG1/BAF190A, SMARCB1/BAF47/SNF5, ACTL6A/BAF53A, SMARCE1/BAF57, SMARCD1/BAF60A, SMARCC1/BAF155, SMARCC2/BAF170, BAF250A and MLLT1/ENL. Interacts through its C-terminus with SMARCA2/BRM/BAF190B and SMARCA4/BRG1/BAF190A. Interacts with SMARCC1/BAF155. Interacts with FOS, FOSB isoform 1 and 2, FOSL1 and FOSL2. Highly expressed in spleen, thymus, prostate, testis, ovary, small intestine, colon, and PBL, and at a much lower level in heart, brain, placenta, lung, liver, skeletal muscle, kidney, and pancreas.

The protein resides in the nucleus. Involved in transcriptional activation and repression of select genes by chromatin remodeling (alteration of DNA-nucleosome topology). Component of SWI/SNF chromatin remodeling complexes that carry out key enzymatic activities, changing chromatin structure by altering DNA-histone contacts within a nucleosome in an ATP-dependent manner. Binds DNA non-specifically. Belongs to the neural progenitors-specific chromatin remodeling complex (npBAF complex) and the neuron-specific chromatin remodeling complex (nBAF complex). During neural development a switch from a stem/progenitor to a postmitotic chromatin remodeling mechanism occurs as neurons exit the cell cycle and become committed to their adult state. The transition from proliferating neural stem/progenitor cells to postmitotic neurons requires a switch in subunit composition of the npBAF and nBAF complexes. As neural progenitors exit mitosis and differentiate into neurons, npBAF complexes which contain ACTL6A/BAF53A and PHF10/BAF45A, are exchanged for homologous alternative ACTL6B/BAF53B and DPF1/BAF45B or DPF3/BAF45C subunits in neuron-specific complexes (nBAF). The npBAF complex is essential for the self-renewal/proliferative capacity of the multipotent neural stem cells. The nBAF complex along with CREST plays a role regulating the activity of genes essential for dendrite growth. The chain is AT-rich interactive domain-containing protein 1A (ARID1A) from Homo sapiens (Human).